The chain runs to 423 residues: Gamma-glutamyl phosphate reductase (423 aa).

Belongs to the gamma-glutamyl phosphate reductase family.

Its subcellular location is the cytoplasm. It carries out the reaction L-glutamate 5-semialdehyde + phosphate + NADP(+) = L-glutamyl 5-phosphate + NADPH + H(+). It participates in amino-acid biosynthesis; L-proline biosynthesis; L-glutamate 5-semialdehyde from L-glutamate: step 2/2. In terms of biological role, catalyzes the NADPH-dependent reduction of L-glutamate 5-phosphate into L-glutamate 5-semialdehyde and phosphate. The product spontaneously undergoes cyclization to form 1-pyrroline-5-carboxylate. The protein is Gamma-glutamyl phosphate reductase of Paraburkholderia phymatum (strain DSM 17167 / CIP 108236 / LMG 21445 / STM815) (Burkholderia phymatum).